Here is a 104-residue protein sequence, read N- to C-terminus: Transcription initiation factor IIA subunit 2 (104 aa).

It belongs to the TFIIA subunit 2 family. As to quaternary structure, TFIIA is a heterodimer of the large unprocessed subunit 1 and a small subunit gamma.

The protein resides in the nucleus. Its function is as follows. TFIIA is a component of the transcription machinery of RNA polymerase II and plays an important role in transcriptional activation. TFIIA in a complex with TBP mediates transcriptional activity. This is Transcription initiation factor IIA subunit 2 from Schistosoma mansoni (Blood fluke).